We begin with the raw amino-acid sequence, 144 residues long: Large ribosomal subunit protein uL16 (144 aa).

The protein belongs to the universal ribosomal protein uL16 family. As to quaternary structure, part of the 50S ribosomal subunit.

Functionally, binds 23S rRNA and is also seen to make contacts with the A and possibly P site tRNAs. The polypeptide is Large ribosomal subunit protein uL16 (Novosphingobium aromaticivorans (strain ATCC 700278 / DSM 12444 / CCUG 56034 / CIP 105152 / NBRC 16084 / F199)).